Consider the following 344-residue polypeptide: Uroporphyrinogen decarboxylase (344 aa).

Substrate contacts are provided by residues 23-27, Asp-73, Tyr-149, Thr-204, and His-321; that span reads RQAGR.

Belongs to the uroporphyrinogen decarboxylase family. In terms of assembly, homodimer.

Its subcellular location is the cytoplasm. The catalysed reaction is uroporphyrinogen III + 4 H(+) = coproporphyrinogen III + 4 CO2. It participates in porphyrin-containing compound metabolism; protoporphyrin-IX biosynthesis; coproporphyrinogen-III from 5-aminolevulinate: step 4/4. Its function is as follows. Catalyzes the decarboxylation of four acetate groups of uroporphyrinogen-III to yield coproporphyrinogen-III. In Francisella tularensis subsp. tularensis (strain FSC 198), this protein is Uroporphyrinogen decarboxylase.